The following is a 403-amino-acid chain: Phosphopentomutase (403 aa).

Mn(2+)-binding residues include Asp13, Asp298, His303, Asp339, His340, and His351.

This sequence belongs to the phosphopentomutase family. Mn(2+) is required as a cofactor.

Its subcellular location is the cytoplasm. It catalyses the reaction 2-deoxy-alpha-D-ribose 1-phosphate = 2-deoxy-D-ribose 5-phosphate. The catalysed reaction is alpha-D-ribose 1-phosphate = D-ribose 5-phosphate. The protein operates within carbohydrate degradation; 2-deoxy-D-ribose 1-phosphate degradation; D-glyceraldehyde 3-phosphate and acetaldehyde from 2-deoxy-alpha-D-ribose 1-phosphate: step 1/2. In terms of biological role, isomerase that catalyzes the conversion of deoxy-ribose 1-phosphate (dRib-1-P) and ribose 1-phosphate (Rib-1-P) to deoxy-ribose 5-phosphate (dRib-5-P) and ribose 5-phosphate (Rib-5-P), respectively. The protein is Phosphopentomutase of Streptococcus thermophilus (strain ATCC BAA-491 / LMD-9).